The following is an 82-amino-acid chain: ATP synthase subunit c, chloroplastic (82 aa).

Helical transmembrane passes span 4–24 (IISAASVIAAGLSVGLAAIGP) and 57–77 (LAFMEALTIYGLVVALSLLFA).

Belongs to the ATPase C chain family. F-type ATPases have 2 components, F(1) - the catalytic core - and F(0) - the membrane proton channel. F(1) has five subunits: alpha(3), beta(3), gamma(1), delta(1), epsilon(1). F(0) has four main subunits: a(1), b(1), b'(1) and c(10-14). The alpha and beta chains form an alternating ring which encloses part of the gamma chain. F(1) is attached to F(0) by a central stalk formed by the gamma and epsilon chains, while a peripheral stalk is formed by the delta, b and b' chains.

The protein resides in the plastid. The protein localises to the chloroplast thylakoid membrane. In terms of biological role, f(1)F(0) ATP synthase produces ATP from ADP in the presence of a proton or sodium gradient. F-type ATPases consist of two structural domains, F(1) containing the extramembraneous catalytic core and F(0) containing the membrane proton channel, linked together by a central stalk and a peripheral stalk. During catalysis, ATP synthesis in the catalytic domain of F(1) is coupled via a rotary mechanism of the central stalk subunits to proton translocation. Its function is as follows. Key component of the F(0) channel; it plays a direct role in translocation across the membrane. A homomeric c-ring of between 10-14 subunits forms the central stalk rotor element with the F(1) delta and epsilon subunits. The polypeptide is ATP synthase subunit c, chloroplastic (Heterosigma akashiwo (strain NIES-293 / 8280G21-1)).